The following is an 846-amino-acid chain: Enhancer of polycomb-like protein 1 (846 aa).

Disordered regions lie at residues 169–204, 391–466, 587–609, 682–702, and 759–804; these read FNSK…KGDA, TSDE…APDA, EKKR…PKAM, AADA…PQPN, and QVQA…GVKQ. The span at 180-203 shows a compositional bias: basic and acidic residues; sequence VKSDKEQGRGMRVKGKDREKEKGD. Residues 411 to 426 are compositionally biased toward polar residues; it reads PSLSGQTPLTSGQSSS. The span at 432–452 shows a compositional bias: basic and acidic residues; that stretch reads TDKDREERAQRERYDAQRNAE. The stretch at 434–490 forms a coiled coil; it reads KDREERAQRERYDAQRNAERSGILSGRSNAPDALKERLQALQQKTEEMLARKKEQDA. Pro residues predominate over residues 686-702; sequence KPPPAPIFQKPPAPQPN. Residues 759–773 show a composition bias toward low complexity; it reads QVQAQGQGHPQAHLQ. Positions 774-796 are enriched in polar residues; sequence THPQGVSQPNGVNSPMPNGQQML.

It belongs to the enhancer of polycomb family. As to quaternary structure, component of the NuA4 histone acetyltransferase complex.

The protein resides in the nucleus. Component of the NuA4 histone acetyltransferase complex which is involved in transcriptional activation of selected genes principally by acetylation of nucleosomal histone H4 and H2A. The NuA4 complex is also involved in DNA repair. Involved in gene silencing by neighboring heterochromatin, blockage of the silencing spreading along the chromosome, and required for cell cycle progression through G2/M. The sequence is that of Enhancer of polycomb-like protein 1 (EPL1) from Cryptococcus neoformans var. neoformans serotype D (strain B-3501A) (Filobasidiella neoformans).